Consider the following 433-residue polypeptide: PBSX phage terminase large subunit (433 aa).

To B.subtilis YqaT and phage SPP1 terminase large subunit. As to quaternary structure, dimer of a small and a large subunit.

Functions as a terminase. The protein is PBSX phage terminase large subunit (xtmB) of Bacillus subtilis (strain 168).